We begin with the raw amino-acid sequence, 550 residues long: MASPLNRPGLRAAAASAALTLVALSANVPAAQAIPPPSVDPAMVPADARPGPDQPMRRSNSCSTPITVRNPDVAQLAPGFNLVNISKAWQYSTGNGVPVAVIDTGVSPNPRLPVVPGGDYIMGEDGLSDCDAHGTVVSSIIAAAPLGILPMPRAMPATAAFPPPAGPPPVTAAPAPPVEVPPPMPPPPPVTITQTVAPPPPPPEDAGAMAPSNGPPDPQTEDEPAVPPPPPGAPDGVVGVAPHATIISIRQSSRAFEPVNPSSAGPNSDEKVKAGTLDSVARAVVHAANMGAKVINISVTACLPAAAPGDQRVLGAALWYAATVKDAVIVAAAGNDGEAGCGNNPMYDPLDPSDPRDWHQVTVVSSPSWFSDYVLSVGAVDAYGAALDKSMSGPWVGVAAPGTHIMGLSPQGGGPVNAYPPSRPGEKNMPFWGTSFSAAYVSGVAALVRAKFPELTAYQVINRIVQSAHNPPAGVDNKLGYGLVDPVAALTFNIPSGDRMAPGAQSRVITPAAPPPPPDHRARNIAIGFVGAVATGVLAMAIGARLRRAR.

An N-terminal signal peptide occupies residues M1–A33. Positions I34–C62 are disordered. The Peptidase S8 domain occupies G79–L490. Residues D103 and H133 each act as charge relay system in the active site. A compositionally biased stretch (pro residues) spans P168–V190. The segment at P168 to G236 is disordered. S435 (charge relay system) is an active-site residue. Residues N524–A544 form a helical membrane-spanning segment.

This sequence belongs to the peptidase S8 family.

The protein resides in the cell membrane. The chain is Mycosin-2 from Mycobacterium tuberculosis (strain ATCC 25618 / H37Rv).